The sequence spans 338 residues: UDP-3-O-acylglucosamine N-acyltransferase (338 aa).

H243 serves as the catalytic Proton acceptor.

Belongs to the transferase hexapeptide repeat family. LpxD subfamily. Homotrimer.

The enzyme catalyses a UDP-3-O-[(3R)-3-hydroxyacyl]-alpha-D-glucosamine + a (3R)-hydroxyacyl-[ACP] = a UDP-2-N,3-O-bis[(3R)-3-hydroxyacyl]-alpha-D-glucosamine + holo-[ACP] + H(+). It participates in bacterial outer membrane biogenesis; LPS lipid A biosynthesis. Functionally, catalyzes the N-acylation of UDP-3-O-acylglucosamine using 3-hydroxyacyl-ACP as the acyl donor. Is involved in the biosynthesis of lipid A, a phosphorylated glycolipid that anchors the lipopolysaccharide to the outer membrane of the cell. This Amoebophilus asiaticus (strain 5a2) protein is UDP-3-O-acylglucosamine N-acyltransferase.